The primary structure comprises 278 residues: S-formylglutathione hydrolase YeiG (278 aa).

Catalysis depends on charge relay system residues Ser-145, Asp-223, and His-256.

Belongs to the esterase D family.

The enzyme catalyses S-formylglutathione + H2O = formate + glutathione + H(+). Its function is as follows. Serine hydrolase involved in the detoxification of formaldehyde. Hydrolyzes S-formylglutathione to glutathione and formate. In Escherichia coli (strain SMS-3-5 / SECEC), this protein is S-formylglutathione hydrolase YeiG (yeiG).